A 190-amino-acid chain; its full sequence is Small ribosomal subunit protein uS4 (190 aa).

Positions 106 to 178 constitute an S4 RNA-binding domain; sequence RRLQTVVFKH…GRVKRVKRNA (73 aa). The disordered stretch occupies residues 166 to 190; it reads GRPGRVKRVKRNAAKKGSGGGDDDE. The span at 169-179 shows a compositional bias: basic residues; it reads GRVKRVKRNAA.

This sequence belongs to the universal ribosomal protein uS4 family.

This Trypanosoma brucei brucei protein is Small ribosomal subunit protein uS4.